An 815-amino-acid chain; its full sequence is Phenylalanine--tRNA ligase beta subunit (815 aa).

The region spanning 39–148 (SKELQKFEVA…KDAVVGDNFT (110 aa)) is the tRNA-binding domain. In terms of domain architecture, B5 spans 421–496 (PQKKPLDFSV…RIYGYDKIES (76 aa)). Mg(2+) is bound by residues D474, D480, E483, and E484. The region spanning 721-814 (SDYQANFRDY…ISQKFQGILR (94 aa)) is the FDX-ACB domain.

It belongs to the phenylalanyl-tRNA synthetase beta subunit family. Type 1 subfamily. Tetramer of two alpha and two beta subunits. The cofactor is Mg(2+).

The protein resides in the cytoplasm. The catalysed reaction is tRNA(Phe) + L-phenylalanine + ATP = L-phenylalanyl-tRNA(Phe) + AMP + diphosphate + H(+). In Rickettsia prowazekii (strain Madrid E), this protein is Phenylalanine--tRNA ligase beta subunit (pheT).